A 347-amino-acid polypeptide reads, in one-letter code: Oxygen sensor histidine kinase NreB (347 aa).

Positions 59, 62, 74, and 77 each coordinate [4Fe-4S] cluster. Positions 153–347 (RISRELHDGI…IVTLEVPITD (195 aa)) constitute a Histidine kinase domain. Position 159 is a phosphohistidine; by autocatalysis (H159).

[4Fe-4S] cluster serves as cofactor. Post-translationally, autophosphorylated.

It is found in the cytoplasm. It catalyses the reaction ATP + protein L-histidine = ADP + protein N-phospho-L-histidine.. Its activity is regulated as follows. Activated by cysteine desulfurase, Fe(2+) ions and cysteine and inhibited by oxygen and ADP. Its function is as follows. Member of the two-component regulatory system NreB/NreC involved in the control of dissimilatory nitrate/nitrite reduction in response to oxygen. NreB functions as a direct oxygen sensor histidine kinase which is autophosphorylated, in the absence of oxygen, probably at the conserved histidine residue, and transfers its phosphate group probably to a conserved aspartate residue of NreC. NreB/NreC activates the expression of the nitrate (narGHJI) and nitrite (nir) reductase operons, as well as the putative nitrate transporter gene narT. In Staphylococcus carnosus (strain TM300), this protein is Oxygen sensor histidine kinase NreB (nreB).